The chain runs to 880 residues: Alanine--tRNA ligase (880 aa).

His567, His571, Cys669, and His673 together coordinate Zn(2+).

It belongs to the class-II aminoacyl-tRNA synthetase family. Requires Zn(2+) as cofactor.

It localises to the cytoplasm. The catalysed reaction is tRNA(Ala) + L-alanine + ATP = L-alanyl-tRNA(Ala) + AMP + diphosphate. In terms of biological role, catalyzes the attachment of alanine to tRNA(Ala) in a two-step reaction: alanine is first activated by ATP to form Ala-AMP and then transferred to the acceptor end of tRNA(Ala). Also edits incorrectly charged Ser-tRNA(Ala) and Gly-tRNA(Ala) via its editing domain. The chain is Alanine--tRNA ligase from Bacillus cereus (strain ZK / E33L).